The following is a 451-amino-acid chain: 3-carboxy-cis,cis-muconate cycloisomerase (451 aa).

This sequence belongs to the class-II fumarase/aspartase family. In terms of assembly, homotetramer.

It catalyses the reaction 2-(carboxymethyl)-5-oxo-2,5-dihydro-2-furoate = 3-carboxy-cis,cis-muconate + H(+). Its pathway is aromatic compound metabolism; beta-ketoadipate pathway; 5-oxo-4,5-dihydro-2-furylacetate from 3-carboxy-cis,cis-muconate: step 1/2. Its function is as follows. Catalyzes an anti cycloisomerization. The polypeptide is 3-carboxy-cis,cis-muconate cycloisomerase (pcaB) (Acinetobacter baylyi (strain ATCC 33305 / BD413 / ADP1)).